We begin with the raw amino-acid sequence, 671 residues long: Probable potassium transport system protein Kup (671 aa).

The tract at residues 1–43 (MSQIPSPNDPASTGAAPSSAAVPAGPSATPAPSPTAGFSLPGH) is disordered. The span at 10–37 (PASTGAAPSSAAVPAGPSATPAPSPTAG) shows a compositional bias: low complexity. 12 helical membrane-spanning segments follow: residues 52-72 (LAALAVGALGVVYGDIGTSPL), 92-112 (VLGVLSLVFWAMTFVVTFKYM), 147-167 (LMLGLFGAALLYGDGIITPAI), 181-201 (PAMERAVVPATVVILVFLFLF), 209-229 (VGAVFGPVMLVWFATIAVLGV), 255-275 (GWHGFLVLGGVVLVITGGEAL), 291-311 (WLGLAMPALLLNYLGQGALLL), 323-343 (LLAPEWALYPTIAIATAAAIV), 381-401 (IYLPEVNWMLGTACLALVLGF), 407-427 (LASAYGIAVTGTMIVTTLLFH), 441-461 (AWPLTSLFLTVDASFFLANVV), and 465-485 (DGGWFPIAAAALVFTLMSTWK).

This sequence belongs to the HAK/KUP transporter (TC 2.A.72) family.

It is found in the cell inner membrane. The enzyme catalyses K(+)(in) + H(+)(in) = K(+)(out) + H(+)(out). Its function is as follows. Transport of potassium into the cell. Likely operates as a K(+):H(+) symporter. This is Probable potassium transport system protein Kup from Anaeromyxobacter sp. (strain K).